Reading from the N-terminus, the 274-residue chain is Kit ligand (274 aa).

An N-terminal signal peptide occupies residues 1-25 (MKKTQTWIITCIYLQLLLFNPLVHS). The residue at position 26 (Gln26) is a Pyrrolidone carboxylic acid. Topologically, residues 26 to 215 (QGICRNRVTD…SNSIEDSSLQ (190 aa)) are extracellular. 2 cysteine pairs are disulfide-bonded: Cys29-Cys114 and Cys68-Cys164. N-linked (GlcNAc...) asparagine glycans are attached at residues Asn90, Asn97, Asn145, and Asn196. Residues 216–238 (WAAVALPAFFSLVIGFAFGALYW) form a helical membrane-spanning segment. At 239 to 274 (KKKQPNLTRTVENRQINEEDNEISMLQEKEREFQEV) the chain is on the cytoplasmic side.

It belongs to the SCF family. As to quaternary structure, homodimer, non-covalently linked. Post-translationally, a soluble form is produced by proteolytic processing of the extracellular domain.

The protein localises to the cytoplasm. The protein resides in the cytoskeleton. Its subcellular location is the cell membrane. It is found in the cell projection. It localises to the lamellipodium. The protein localises to the filopodium. The protein resides in the secreted. Its function is as follows. Stimulates the proliferation of mast cells. Able to augment the proliferation of both myeloid and lymphoid hematopoietic progenitors in bone marrow culture. Also mediates cell-cell adhesion. Acts synergistically with other cytokines, probably interleukins. The polypeptide is Kit ligand (KITLG) (Capra hircus (Goat)).